A 403-amino-acid polypeptide reads, in one-letter code: Ribosomal RNA large subunit methyltransferase I (403 aa).

Residues 9–88 (YPRLVLSKGR…EPVDIAFFTR (80 aa)) enclose the PUA domain.

It belongs to the methyltransferase superfamily. RlmI family.

It localises to the cytoplasm. The catalysed reaction is cytidine(1962) in 23S rRNA + S-adenosyl-L-methionine = 5-methylcytidine(1962) in 23S rRNA + S-adenosyl-L-homocysteine + H(+). Its function is as follows. Specifically methylates the cytosine at position 1962 (m5C1962) of 23S rRNA. The sequence is that of Ribosomal RNA large subunit methyltransferase I from Salmonella arizonae (strain ATCC BAA-731 / CDC346-86 / RSK2980).